The following is a 153-amino-acid chain: Ribosome maturation factor RimP (153 aa).

It belongs to the RimP family.

It is found in the cytoplasm. Functionally, required for maturation of 30S ribosomal subunits. This Coxiella burnetii (strain RSA 331 / Henzerling II) protein is Ribosome maturation factor RimP.